We begin with the raw amino-acid sequence, 329 residues long: Small ribosomal subunit protein uS2 (329 aa).

Belongs to the universal ribosomal protein uS2 family.

This chain is Small ribosomal subunit protein uS2, found in Bradyrhizobium sp. (strain ORS 278).